We begin with the raw amino-acid sequence, 154 residues long: SsrA-binding protein (154 aa).

The protein belongs to the SmpB family.

It localises to the cytoplasm. Its function is as follows. Required for rescue of stalled ribosomes mediated by trans-translation. Binds to transfer-messenger RNA (tmRNA), required for stable association of tmRNA with ribosomes. tmRNA and SmpB together mimic tRNA shape, replacing the anticodon stem-loop with SmpB. tmRNA is encoded by the ssrA gene; the 2 termini fold to resemble tRNA(Ala) and it encodes a 'tag peptide', a short internal open reading frame. During trans-translation Ala-aminoacylated tmRNA acts like a tRNA, entering the A-site of stalled ribosomes, displacing the stalled mRNA. The ribosome then switches to translate the ORF on the tmRNA; the nascent peptide is terminated with the 'tag peptide' encoded by the tmRNA and targeted for degradation. The ribosome is freed to recommence translation, which seems to be the essential function of trans-translation. The sequence is that of SsrA-binding protein from Methylobacillus flagellatus (strain ATCC 51484 / DSM 6875 / VKM B-1610 / KT).